The primary structure comprises 882 residues: Alanine--tRNA ligase (882 aa).

Residues His568, His572, Cys670, and His674 each coordinate Zn(2+).

It belongs to the class-II aminoacyl-tRNA synthetase family. Zn(2+) is required as a cofactor.

It is found in the cytoplasm. The enzyme catalyses tRNA(Ala) + L-alanine + ATP = L-alanyl-tRNA(Ala) + AMP + diphosphate. Its function is as follows. Catalyzes the attachment of alanine to tRNA(Ala) in a two-step reaction: alanine is first activated by ATP to form Ala-AMP and then transferred to the acceptor end of tRNA(Ala). Also edits incorrectly charged Ser-tRNA(Ala) and Gly-tRNA(Ala) via its editing domain. This Syntrophotalea carbinolica (strain DSM 2380 / NBRC 103641 / GraBd1) (Pelobacter carbinolicus) protein is Alanine--tRNA ligase.